The following is a 368-amino-acid chain: Nicotinate-nucleotide--dimethylbenzimidazole phosphoribosyltransferase (368 aa).

The active-site Proton acceptor is the Glu-314. A disordered region spans residues 344-368 (DRADGADNSADSGASAGTVASDPTV). The span at 349 to 360 (ADNSADSGASAG) shows a compositional bias: low complexity.

This sequence belongs to the CobT family.

It carries out the reaction 5,6-dimethylbenzimidazole + nicotinate beta-D-ribonucleotide = alpha-ribazole 5'-phosphate + nicotinate + H(+). The protein operates within nucleoside biosynthesis; alpha-ribazole biosynthesis; alpha-ribazole from 5,6-dimethylbenzimidazole: step 1/2. In terms of biological role, catalyzes the synthesis of alpha-ribazole-5'-phosphate from nicotinate mononucleotide (NAMN) and 5,6-dimethylbenzimidazole (DMB). The protein is Nicotinate-nucleotide--dimethylbenzimidazole phosphoribosyltransferase of Corynebacterium efficiens (strain DSM 44549 / YS-314 / AJ 12310 / JCM 11189 / NBRC 100395).